Consider the following 251-residue polypeptide: Cell division protein ZapD (251 aa).

The protein belongs to the ZapD family. Interacts with FtsZ.

It is found in the cytoplasm. Cell division factor that enhances FtsZ-ring assembly. Directly interacts with FtsZ and promotes bundling of FtsZ protofilaments, with a reduction in FtsZ GTPase activity. The protein is Cell division protein ZapD of Burkholderia lata (strain ATCC 17760 / DSM 23089 / LMG 22485 / NCIMB 9086 / R18194 / 383).